The following is a 615-amino-acid chain: 3-(3-hydroxy-phenyl)propionate/3-hydroxycinnamic acid hydroxylase 1 (615 aa).

The segment at M1–T20 is disordered. Residues D27–K56 and F294–D304 contribute to the FAD site.

This sequence belongs to the PheA/TfdB FAD monooxygenase family. Requires FAD as cofactor.

It carries out the reaction 3-(3-hydroxyphenyl)propanoate + NADH + O2 + H(+) = 3-(2,3-dihydroxyphenyl)propanoate + NAD(+) + H2O. The enzyme catalyses (2E)-3-(3-hydroxyphenyl)prop-2-enoate + NADH + O2 + H(+) = (2E)-3-(2,3-dihydroxyphenyl)prop-2-enoate + NAD(+) + H2O. It participates in aromatic compound metabolism; 3-phenylpropanoate degradation. In terms of biological role, catalyzes the insertion of one atom of molecular oxygen into position 2 of the phenyl ring of 3-(3-hydroxyphenyl)propionate (3-HPP) and hydroxycinnamic acid (3HCI). The polypeptide is 3-(3-hydroxy-phenyl)propionate/3-hydroxycinnamic acid hydroxylase 1 (Burkholderia vietnamiensis (strain G4 / LMG 22486) (Burkholderia cepacia (strain R1808))).